The following is a 123-amino-acid chain: MGFVLICTCPPSSGVVVSQLHHHQFSAGVKSNELWFRPTRRTLISKSSCFNLPQEPILSEALKEPIAFLGGMFAGLLRLDLNEEPLKDWVTRTVEASGITEEEVDADGVVSNDEDSPQQIEIE.

A chloroplast-targeting transit peptide spans 1 to 26 (MGFVLICTCPPSSGVVVSQLHHHQFS). Residues 97-123 (SGITEEEVDADGVVSNDEDSPQQIEIE) are disordered. Positions 100-123 (TEEEVDADGVVSNDEDSPQQIEIE) are enriched in acidic residues.

It belongs to the UPF0426 family.

The protein localises to the plastid. It is found in the chloroplast. Its subcellular location is the plastoglobule. This Arabidopsis thaliana (Mouse-ear cress) protein is UPF0426 protein At1g28150, chloroplastic.